Reading from the N-terminus, the 308-residue chain is Ribose 1,5-bisphosphate isomerase (308 aa).

Residues R24 to G27 and R67 contribute to the substrate site. The active-site Proton acceptor is C129. Residue D198 is the Proton donor of the active site. Residues N208–K209 and K234 contribute to the substrate site.

The protein belongs to the eIF-2B alpha/beta/delta subunits family. R15P isomerase subfamily.

It catalyses the reaction alpha-D-ribose 1,5-bisphosphate = D-ribulose 1,5-bisphosphate. Catalyzes the isomerization of ribose 1,5-bisphosphate (R15P) to ribulose 1,5-bisphosphate (RuBP), the CO(2) acceptor and substrate for RubisCO. Functions in an archaeal AMP degradation pathway, together with AMP phosphorylase and RubisCO. The polypeptide is Ribose 1,5-bisphosphate isomerase (Methanocaldococcus jannaschii (strain ATCC 43067 / DSM 2661 / JAL-1 / JCM 10045 / NBRC 100440) (Methanococcus jannaschii)).